A 219-amino-acid polypeptide reads, in one-letter code: Interleukin-12 subunit alpha (219 aa).

Positions 1–22 (MCPARSLLLVATLVLLDYLSLA) are cleaved as a signal peptide. Residues N24 and N93 are each glycosylated (N-linked (GlcNAc...) asparagine). Cystine bridges form between C37/C110, C64/C196, and C85/C123.

The protein belongs to the IL-6 superfamily. In terms of assembly, heterodimer with IL12B; disulfide-linked. This heterodimer is known as interleukin IL-12. Heterodimer with EBI3/IL27B; not disulfide-linked. This heterodimer is known as interleukin IL-35. Interacts with NBR1; this interaction promotes IL-12 secretion.

It localises to the secreted. Its function is as follows. Heterodimerizes with IL12B to form the IL-12 cytokine or with EBI3/IL27B to form the IL-35 cytokine. IL-12 is primarily produced by professional antigen-presenting cells (APCs) such as B-cells and dendritic cells (DCs) as well as macrophages and granulocytes and regulates T-cell and natural killer-cell responses, induces the production of interferon-gamma (IFN-gamma), favors the differentiation of T-helper 1 (Th1) cells and is an important link between innate resistance and adaptive immunity. Mechanistically, exerts its biological effects through a receptor composed of IL12R1 and IL12R2 subunits. Binding to the receptor results in the rapid tyrosine phosphorylation of a number of cellular substrates including the JAK family kinases TYK2 and JAK2. In turn, recruited STAT4 gets phosphorylated and translocates to the nucleus where it regulates cytokine/growth factor responsive genes. As part of IL-35, plays essential roles in maintaining the immune homeostasis of the liver microenvironment and also functions as an immune-suppressive cytokine. Mediates biological events through unconventional receptors composed of IL12RB2 and gp130/IL6ST heterodimers or homodimers. Signaling requires the transcription factors STAT1 and STAT4, which form a unique heterodimer that binds to distinct DNA sites. The sequence is that of Interleukin-12 subunit alpha (IL12A) from Papio anubis (Olive baboon).